Here is a 242-residue protein sequence, read N- to C-terminus: MQRFVCSGVFRQTSVLLQISPVSHCHTRRMQDSPSHRSLKQLISSQRWLNSTTALCSPTSQKTSASGQEEPDPLHDKSSGLIQRFKKTFKQYGKVMIPVHLLTSTMWFGTFYYAAMKGVNLVPFLEYVGFPDKVVKLLENSQSGYALTAYAMYKIATPARYTVTLGGTSLSVKYLRKHGYMSTPPPVKEYLQEKMEETKERISGKMEETKDRFSERMEETKDKFNEKLQETKDKVSFRKKKE.

The segment covering 57 to 67 (SPTSQKTSASG) has biased composition (polar residues). A disordered region spans residues 57–78 (SPTSQKTSASGQEEPDPLHDKS). The region spanning 76–188 (DKSSGLIQRF…GYMSTPPPVK (113 aa)) is the DUF1279 domain. Residues 92–114 (YGKVMIPVHLLTSTMWFGTFYYA) traverse the membrane as a helical segment. Residues 188 to 237 (KEYLQEKMEETKERISGKMEETKDRFSERMEETKDKFNEKLQETKDKVSF) are a coiled coil. The span at 198–236 (TKERISGKMEETKDRFSERMEETKDKFNEKLQETKDKVS) shows a compositional bias: basic and acidic residues. The interval 198–242 (TKERISGKMEETKDRFSERMEETKDKFNEKLQETKDKVSFRKKKE) is disordered.

It localises to the membrane. This is an uncharacterized protein from Danio rerio (Zebrafish).